We begin with the raw amino-acid sequence, 292 residues long: MVSSMRSLFSDHGKYVESFRRFLNHSTEHQCMQEFMDKKLPGIIARIGDTKSEIKILSIGGGAGEIDLQILSKVQAQYPGVCINNEVVEPSAEQIAKYKGPVAKTSNLENVKFAWHKETSSEYQSRILEKKELQKWDFIHMIQMLYYVKDIPATLKFFHSLLGTNAKMLIIVVSGSSGWDKLWKKYGSRFPQNDLCQYVTSDDLTQMLDNLGLKYECYDLFSTMDISDCFIDGNENGDLLWDFLTETCNFNATAPPDLKAELGKDLQEPEFSAKKEGKVLFNNTLSFIVIEA.

Glu-28 is a binding site for substrate. 5 residues coordinate S-adenosyl-L-methionine: Gly-60, Glu-89, Gln-94, Ser-120, and Ile-142. Asn-283 is a substrate binding site.

Belongs to the class I-like SAM-binding methyltransferase superfamily. HNMT family. Monomer.

Its subcellular location is the cytoplasm. The catalysed reaction is histamine + S-adenosyl-L-methionine = N(tau)-methylhistamine + S-adenosyl-L-homocysteine + H(+). Inactivates histamine by N-methylation. Plays an important role in degrading histamine and in regulating the airway response to histamine. This is Histamine N-methyltransferase (HNMT) from Pongo abelii (Sumatran orangutan).